The chain runs to 556 residues: Genetic interactor of prohibitins 3, mitochondrial (556 aa).

Residues 1–21 (MLNLCHALRGVRQFSCSVIVK) constitute a mitochondrion transit peptide. A CP-type G domain is found at 113–305 (ESTLNDILNY…LFDLPGYSTS (193 aa)).

Belongs to the TRAFAC class YlqF/YawG GTPase family. GEP3 subfamily.

It is found in the mitochondrion. Functionally, interacts genetically with prohibitins and thus may be involved in the mitochondrial lipid metabolism. The polypeptide is Genetic interactor of prohibitins 3, mitochondrial (GEP3) (Saccharomyces cerevisiae (strain AWRI1631) (Baker's yeast)).